A 434-amino-acid polypeptide reads, in one-letter code: UDP-N-acetylglucosamine 1-carboxyvinyltransferase 1 (434 aa).

22–23 serves as a coordination point for phosphoenolpyruvate; the sequence is KN. Arginine 93 serves as a coordination point for UDP-N-acetyl-alpha-D-glucosamine. The active-site Proton donor is cysteine 117. The residue at position 117 (cysteine 117) is a 2-(S-cysteinyl)pyruvic acid O-phosphothioketal. UDP-N-acetyl-alpha-D-glucosamine-binding positions include 122-126, aspartate 306, and valine 328; that span reads RPIDQ.

The protein belongs to the EPSP synthase family. MurA subfamily.

Its subcellular location is the cytoplasm. It catalyses the reaction phosphoenolpyruvate + UDP-N-acetyl-alpha-D-glucosamine = UDP-N-acetyl-3-O-(1-carboxyvinyl)-alpha-D-glucosamine + phosphate. Its pathway is cell wall biogenesis; peptidoglycan biosynthesis. Its function is as follows. Cell wall formation. Adds enolpyruvyl to UDP-N-acetylglucosamine. This is UDP-N-acetylglucosamine 1-carboxyvinyltransferase 1 from Bacillus cereus (strain ATCC 10987 / NRS 248).